Consider the following 86-residue polypeptide: Small ribosomal subunit protein uS17 (86 aa).

It belongs to the universal ribosomal protein uS17 family. Part of the 30S ribosomal subunit.

Functionally, one of the primary rRNA binding proteins, it binds specifically to the 5'-end of 16S ribosomal RNA. This chain is Small ribosomal subunit protein uS17, found in Rhizorhabdus wittichii (strain DSM 6014 / CCUG 31198 / JCM 15750 / NBRC 105917 / EY 4224 / RW1) (Sphingomonas wittichii).